Consider the following 409-residue polypeptide: Serine protease inhibitor 2 (409 aa).

Residues 1–21 form the signal peptide; it reads MNKLNFVILCLAALLVFDATA. N294 and N324 each carry an N-linked (GlcNAc...) asparagine glycan. Residues 356–360 carry the Hinge region; required for binding to peptidase motif; sequence LGSEA.

This sequence belongs to the serpin family. In terms of assembly, forms a covalent heterodimer with protease CLIPB9; the interaction inhibits CLIPB9 protease activity. Forms a covalent heterodimer with protease CLIPB10; the interaction inhibits CLIPB10 catalytic activity. Interacts with CLIPB4 in the hemolymph of immune-challenged female mosquitoes; the interaction results in CLIPB4 inhibition. In terms of processing, protease CLIPB9 binds to SRPN2 via the hinge region resulting in the cleavage of the reactive bond. This leads to a conformational change in SRPN2 which traps CLIPB9 and distorts its active site, resulting in CLIPB9 inactivation.

It localises to the secreted. Serine protease inhibitor that functions in the melanization-mediated immune response. By preventing the activation of phenoloxidases through the inhibiting of serine proteases CLIPB9, CLIPB10 and CLIPB4, negatively regulates melanization in the hemolymph. By preventing melanization, has a detrimental role during P.berghei parasite mediated-infection and invasion of the mosquito midgut. This chain is Serine protease inhibitor 2, found in Anopheles gambiae (African malaria mosquito).